Here is a 65-residue protein sequence, read N- to C-terminus: Large ribosomal subunit protein bL35 (65 aa).

The segment at 1–26 (MPKIKTVRGAAKRFKKTASGGFKRKQ) is disordered. The segment covering 10-26 (AAKRFKKTASGGFKRKQ) has biased composition (basic residues).

This sequence belongs to the bacterial ribosomal protein bL35 family.

In Actinobacillus pleuropneumoniae serotype 7 (strain AP76), this protein is Large ribosomal subunit protein bL35.